Here is a 267-residue protein sequence, read N- to C-terminus: GTP cyclohydrolase FolE2 2 (267 aa).

Belongs to the GTP cyclohydrolase IV family.

It catalyses the reaction GTP + H2O = 7,8-dihydroneopterin 3'-triphosphate + formate + H(+). Its pathway is cofactor biosynthesis; 7,8-dihydroneopterin triphosphate biosynthesis; 7,8-dihydroneopterin triphosphate from GTP: step 1/1. In terms of biological role, converts GTP to 7,8-dihydroneopterin triphosphate. This chain is GTP cyclohydrolase FolE2 2, found in Cupriavidus metallidurans (strain ATCC 43123 / DSM 2839 / NBRC 102507 / CH34) (Ralstonia metallidurans).